The primary structure comprises 574 residues: Proline--tRNA ligase (574 aa).

It belongs to the class-II aminoacyl-tRNA synthetase family. ProS type 1 subfamily. Homodimer.

Its subcellular location is the cytoplasm. It carries out the reaction tRNA(Pro) + L-proline + ATP = L-prolyl-tRNA(Pro) + AMP + diphosphate. In terms of biological role, catalyzes the attachment of proline to tRNA(Pro) in a two-step reaction: proline is first activated by ATP to form Pro-AMP and then transferred to the acceptor end of tRNA(Pro). As ProRS can inadvertently accommodate and process non-cognate amino acids such as alanine and cysteine, to avoid such errors it has two additional distinct editing activities against alanine. One activity is designated as 'pretransfer' editing and involves the tRNA(Pro)-independent hydrolysis of activated Ala-AMP. The other activity is designated 'posttransfer' editing and involves deacylation of mischarged Ala-tRNA(Pro). The misacylated Cys-tRNA(Pro) is not edited by ProRS. The sequence is that of Proline--tRNA ligase from Teredinibacter turnerae (strain ATCC 39867 / T7901).